Here is a 317-residue protein sequence, read N- to C-terminus: Melanocyte-stimulating hormone receptor (317 aa).

Residues 1 to 37 lie on the Extracellular side of the membrane; it reads MPVLGSQRRLLGSLNCTPPATFSLTLAPNRTGPQCLE. The N-linked (GlcNAc...) asparagine glycan is linked to asparagine 29. A helical membrane pass occupies residues 38–63; it reads VSIPDGLFLSLGLVSLVENVLVVAAI. Topologically, residues 64–72 are cytoplasmic; sequence AKNRNLHSP. The helical transmembrane segment at 73–93 threads the bilayer; sequence MYYFICCLAVSDLLVSVSNVL. At 94 to 118 the chain is on the extracellular side; the sequence is ETAVMLLLEAGALAARAAVVQQLDN. A helical membrane pass occupies residues 119-140; it reads VIDVLICGSMVSSLCFLGAIAM. Residues 141–163 lie on the Cytoplasmic side of the membrane; sequence DRYISIFYALRYHSVVTLPRAWR. Residues 164–183 traverse the membrane as a helical segment; it reads IIAAIWVASILTSLLFITYY. The Extracellular portion of the chain corresponds to 184 to 191; that stretch reads NHTVVLLC. The chain crosses the membrane as a helical span at residues 192–211; it reads LVGFFIAMLALMAILYVHML. Over 212-240 the chain is Cytoplasmic; it reads ARACQHARDIARLQKRQHPIHQGFGLKGA. Residues 241 to 266 traverse the membrane as a helical segment; the sequence is ATLTILLGVFFLCWGPFFLHLSLIVL. The Extracellular portion of the chain corresponds to 267-279; that stretch reads CPQHPTCGCIFKN. Residues 280 to 300 traverse the membrane as a helical segment; that stretch reads FNLFLALIICNAIVDPLIYAF. The Cytoplasmic segment spans residues 301-317; sequence RSQELRKTLQEVLQCSW. Cysteine 315 is lipidated: S-palmitoyl cysteine.

Belongs to the G-protein coupled receptor 1 family. Interacts with MGRN1, but does not undergo MGRN1-mediated ubiquitination; this interaction competes with GNAS-binding and thus inhibits agonist-induced cAMP production. Interacts with OPN3; the interaction results in a decrease in MC1R-mediated cAMP signaling and ultimately a decrease in melanin production in melanocytes.

The protein resides in the cell membrane. In terms of biological role, receptor for MSH (alpha, beta and gamma) and ACTH. The activity of this receptor is mediated by G proteins which activate adenylate cyclase. Mediates melanogenesis, the production of eumelanin (black/brown) and phaeomelanin (red/yellow), via regulation of cAMP signaling in melanocytes. The protein is Melanocyte-stimulating hormone receptor (MC1R) of Alces alces alces (European moose).